A 390-amino-acid polypeptide reads, in one-letter code: ATP-sensitive inward rectifier potassium channel 11 (390 aa).

Residues 1-65 (MLSRKGIIPE…LQDVFTTLVD (65 aa)) are Cytoplasmic-facing. ATP-binding residues include Asn48 and Arg50. Residues 66 to 92 (LKWPHTLLIFTMSFLCSWLLFAMVWWL) form a helical membrane-spanning segment. The Extracellular portion of the chain corresponds to 93–116 (IAFAHGDLAPGEGTTVPCVTSIHS). An intrachain disulfide couples Cys110 to Cys142. Residues 117 to 133 (FSSAFLFSIEVQVTIGF) constitute an intramembrane region (discontinuously helical; Pore-forming). Thr130 and Phe133 together coordinate K(+). A Selectivity filter motif is present at residues 130 to 135 (TIGFGG). The Extracellular portion of the chain corresponds to 134-142 (GGRMVTEEC). The helical transmembrane segment at 143 to 171 (PLAILILIVQNIVGLMINAIMLGCIFMKT) threads the bilayer. Residues 172–390 (SQAHRRAETL…RFSISPDSLS (219 aa)) lie on the Cytoplasmic side of the membrane. Arg176 serves as a coordination point for a 1,2-diacyl-sn-glycero-3-phospho-(1D-myo-inositol-4,5-bisphosphate). Tyr330 lines the ATP pocket. Thr341 is subject to Phosphothreonine; by MAPK1. Ser385 is modified (phosphoserine; by MAPK1).

The protein belongs to the inward rectifier-type potassium channel (TC 1.A.2.1) family. KCNJ11 subfamily. As to quaternary structure, homotetramer; the homotetramer binds four ATP molecules (one ATP per subunit). Forms an heterooctamer with ABCC8/SUR1; one KCNJ11 homotetramer interacts with four ABCC8/SUR1 molecules. Interacts with ABCC9/SUR2. In terms of processing, phosphorylation by MAPK1 results in changes in channel gating that destabilize the closed states and reduce the ATP sensitivity.

The protein localises to the membrane. It carries out the reaction K(+)(in) = K(+)(out). Its activity is regulated as follows. KATP channels are regulated by cytoplasmic ATP/ADP ratios; ATP inhibits the channel by closing the pore, while ADP activates the channel. Activated by phosphatidylinositol 4,5-biphosphate (PtdIns(4,5)P2). In terms of biological role, inward rectifier potassium channel that forms the pore of ATP-sensitive potassium channels (KATP), regulating potassium permeability as a function of cytoplasmic ATP and ADP concentrations in many different cells. Inward rectifier potassium channels are characterized by a greater tendency to allow potassium to flow into the cell rather than out of it. Their voltage dependence is regulated by the concentration of extracellular potassium; as external potassium is raised, the voltage range of the channel opening shifts to more positive voltages. The inward rectification is mainly due to the blockage of outward current by internal magnesium. Can be blocked by extracellular barium. In pancreatic cells, it forms KATP channels with ABCC8/SUR1. Can form cardiac and smooth muscle-type KATP channels with ABCC9. This chain is ATP-sensitive inward rectifier potassium channel 11 (KCNJ11), found in Cavia porcellus (Guinea pig).